A 184-amino-acid polypeptide reads, in one-letter code: Dual-action ribosomal maturation protein DarP (184 aa).

A disordered region spans residues 1–27 (MSIPDTEIPVDDDGYDENGYDRPSKSQ). Acidic residues predominate over residues 8–18 (IPVDDDGYDEN).

Belongs to the DarP family.

The protein localises to the cytoplasm. Its function is as follows. Member of a network of 50S ribosomal subunit biogenesis factors which assembles along the 30S-50S interface, preventing incorrect 23S rRNA structures from forming. Promotes peptidyl transferase center (PTC) maturation. In Bordetella avium (strain 197N), this protein is Dual-action ribosomal maturation protein DarP.